The primary structure comprises 81 residues: MTDLFANPDHTLDALGLRCPEPVMMVRKTVRNMQPGETLLIVADDPATTRDIPGFCRFMEHELVASQTETLPYRYLLRKNQ.

Catalysis depends on Cys19, which acts as the Cysteine persulfide intermediate.

The protein belongs to the sulfur carrier protein TusA family. Interacts with IscS.

It is found in the cytoplasm. Its pathway is tRNA modification. Functionally, sulfur carrier protein involved in sulfur trafficking in the cell. Part of a sulfur-relay system required for 2-thiolation during synthesis of 2-thiouridine of the modified wobble base 5-methylaminomethyl-2-thiouridine (mnm(5)s(2)U) in tRNA. Interacts with IscS and stimulates its cysteine desulfurase activity. Accepts an activated sulfur from IscS, which is then transferred to TusD, and thus determines the direction of sulfur flow from IscS to 2-thiouridine formation. Also appears to be involved in sulfur transfer for the biosynthesis of molybdopterin. This Cronobacter sakazakii (strain ATCC BAA-894) (Enterobacter sakazakii) protein is Sulfur carrier protein TusA.